The sequence spans 716 residues: 1,4-alpha-glucan branching enzyme GlgB (716 aa).

D394 acts as the Nucleophile in catalysis. Residue E447 is the Proton donor of the active site.

It belongs to the glycosyl hydrolase 13 family. GlgB subfamily. Monomer.

It carries out the reaction Transfers a segment of a (1-&gt;4)-alpha-D-glucan chain to a primary hydroxy group in a similar glucan chain.. It functions in the pathway glycan biosynthesis; glycogen biosynthesis. Catalyzes the formation of the alpha-1,6-glucosidic linkages in glycogen by scission of a 1,4-alpha-linked oligosaccharide from growing alpha-1,4-glucan chains and the subsequent attachment of the oligosaccharide to the alpha-1,6 position. The sequence is that of 1,4-alpha-glucan branching enzyme GlgB from Photobacterium profundum (strain SS9).